A 297-amino-acid polypeptide reads, in one-letter code: Formamidopyrimidine-DNA glycosylase (297 aa).

P2 functions as the Schiff-base intermediate with DNA in the catalytic mechanism. Residue E3 is the Proton donor of the active site. K58 functions as the Proton donor; for beta-elimination activity in the catalytic mechanism. 3 residues coordinate DNA: H106, R133, and R178. Residues 263-297 form an FPG-type zinc finger; sequence FVYDRAGEPCRICGTPIRQILQGQRSTFYCPHCQH. The active-site Proton donor; for delta-elimination activity is the R287.

Belongs to the FPG family. Monomer. It depends on Zn(2+) as a cofactor.

The enzyme catalyses Hydrolysis of DNA containing ring-opened 7-methylguanine residues, releasing 2,6-diamino-4-hydroxy-5-(N-methyl)formamidopyrimidine.. It catalyses the reaction 2'-deoxyribonucleotide-(2'-deoxyribose 5'-phosphate)-2'-deoxyribonucleotide-DNA = a 3'-end 2'-deoxyribonucleotide-(2,3-dehydro-2,3-deoxyribose 5'-phosphate)-DNA + a 5'-end 5'-phospho-2'-deoxyribonucleoside-DNA + H(+). Its function is as follows. Involved in base excision repair of DNA damaged by oxidation or by mutagenic agents. Acts as a DNA glycosylase that recognizes and removes damaged bases. Has a preference for oxidized purines, such as 7,8-dihydro-8-oxoguanine (8-oxoG). Has AP (apurinic/apyrimidinic) lyase activity and introduces nicks in the DNA strand. Cleaves the DNA backbone by beta-delta elimination to generate a single-strand break at the site of the removed base with both 3'- and 5'-phosphates. This Cupriavidus metallidurans (strain ATCC 43123 / DSM 2839 / NBRC 102507 / CH34) (Ralstonia metallidurans) protein is Formamidopyrimidine-DNA glycosylase.